The primary structure comprises 458 residues: NALCN channel auxiliary factor 1 (458 aa).

A helical membrane pass occupies residues 40-60; it reads LSLASLLFFTVLLSDHLWFCA. The interval 70-155 is disordered; that stretch reads KEHQQQQRQQ…NRGKDDRGKA (86 aa). Residues 75 to 96 are compositionally biased toward low complexity; that stretch reads QQRQQQQQQQQQRQRQQQQQQR. Over residues 136 to 145 the composition is skewed to gly residues; it reads GDGGGGGGKG. 7 disulfides stabilise this stretch: cysteine 191-cysteine 261, cysteine 226-cysteine 313, cysteine 246-cysteine 261, cysteine 304-cysteine 341, cysteine 324-cysteine 377, cysteine 330-cysteine 376, and cysteine 334-cysteine 361. A glycan (N-linked (GlcNAc...) asparagine) is linked at asparagine 217. The helical transmembrane segment at 417-437 threads the bilayer; it reads LKLCVLVLILLHTVLTASAAQ.

Belongs to the NALF family. As to quaternary structure, component of the NALCN channel complex. NALCN complex consists of NALCN and auxiliary subunits, UNC79, UNC80 and NACL1. These auxiliary subunits are essential for the NALCN channel function.

It localises to the cell membrane. Its function is as follows. Auxillary component of the NALCN sodium channel complex, a channel that regulates the resting membrane potential and controls neuronal excitability. In Homo sapiens (Human), this protein is NALCN channel auxiliary factor 1.